Here is a 309-residue protein sequence, read N- to C-terminus: RHOMBOID-like protein 5 (309 aa).

The next 7 helical transmembrane spans lie at 27–47 (IPVP…FVTF), 113–133 (IWLH…MCIG), 140–160 (FGFM…SLVS), 170–190 (VSVG…SELI), 200–220 (CTAL…GFLP), 222–242 (VDNS…FVLL), and 274–294 (IFRF…YTKL). Ser175 acts as the Nucleophile in catalysis. His227 (charge relay system) is an active-site residue.

It belongs to the peptidase S54 family.

The protein localises to the membrane. It carries out the reaction Cleaves type-1 transmembrane domains using a catalytic dyad composed of serine and histidine that are contributed by different transmembrane domains.. Probable rhomboid-type serine protease that catalyzes intramembrane proteolysis. May function in reproductive organs maturation. The chain is RHOMBOID-like protein 5 from Arabidopsis thaliana (Mouse-ear cress).